Reading from the N-terminus, the 372-residue chain is Putative neuropeptide precursor protein (372 aa).

Positions 1 to 17 (MLLFSLTAITAVLAVSA) are cleaved as a signal peptide. Disordered stretches follow at residues 18–89 (VPTP…SNGE) and 136–208 (VTKS…KRDS). The segment covering 19-31 (PTPSNNKDGSTIS) has biased composition (polar residues). The segment covering 38–57 (DQTKDDNRSLFLNKSDKNDL) has biased composition (basic and acidic residues). The segment covering 72-89 (GYDQTVDQRFDSPQSNGE) has biased composition (polar residues). Residues 177–191 (GGAAASAKTATKNSG) show a composition bias toward low complexity.

May be proteolytically processed to give rise to a number of active peptides. In terms of tissue distribution, detected in the brain and frontal ganglion and in the axons connecting to the corpus cardiacum and corpus allatum (at protein level). Detected in the brain-subesophageal ganglion (brain-SG) complex, fat body, midgut and ovary. Expression in the brain-SG complex is 2-3 times higher than in the other tissues.

The protein resides in the cytoplasm. It is found in the secreted. The protein is Putative neuropeptide precursor protein of Bombyx mori (Silk moth).